A 352-amino-acid polypeptide reads, in one-letter code: Protein SIS1 (352 aa).

The region spanning 4–70 (ETKLYDLLGV…REIYDQYGLE (67 aa)) is the J domain. S275 bears the Phosphoserine mark. The disordered stretch occupies residues 300–325 (VQPVQPSQTSTYPGQGMPTPKNPSQR). Over residues 301–312 (QPVQPSQTSTYP) the composition is skewed to polar residues.

Interacts with polyadenylate-binding protein PAB1.

Its subcellular location is the cytoplasm. The protein resides in the nucleus. In terms of biological role, required for nuclear migration during mitosis. It is required for the normal initiation of translation. Might mediate the dissociation of a specific protein complex of the translation machinery. Essential for viability. The chain is Protein SIS1 (SIS1) from Saccharomyces cerevisiae (strain ATCC 204508 / S288c) (Baker's yeast).